Consider the following 319-residue polypeptide: ATP-dependent 6-phosphofructokinase (319 aa).

Gly11 lines the ATP pocket. Position 21–25 (21–25 (RAVVR)) interacts with ADP. ATP-binding positions include 72–73 (RC) and 102–105 (GDGS). Position 103 (Asp103) interacts with Mg(2+). Position 125–127 (125–127 (TID)) interacts with substrate. Residue Asp127 is the Proton acceptor of the active site. Arg154 contributes to the ADP binding site. Residues Arg162 and 169 to 171 (MGR) each bind substrate. ADP-binding positions include 185–187 (GAE), Arg211, and 213–215 (KRH). Substrate-binding positions include Glu222, Arg243, and 249-252 (HVQR).

The protein belongs to the phosphofructokinase type A (PFKA) family. ATP-dependent PFK group I subfamily. Prokaryotic clade 'B1' sub-subfamily. In terms of assembly, homotetramer. It depends on Mg(2+) as a cofactor.

The protein resides in the cytoplasm. The enzyme catalyses beta-D-fructose 6-phosphate + ATP = beta-D-fructose 1,6-bisphosphate + ADP + H(+). It functions in the pathway carbohydrate degradation; glycolysis; D-glyceraldehyde 3-phosphate and glycerone phosphate from D-glucose: step 3/4. Its activity is regulated as follows. Allosterically activated by ADP and other diphosphonucleosides, and allosterically inhibited by phosphoenolpyruvate. Catalyzes the phosphorylation of D-fructose 6-phosphate to fructose 1,6-bisphosphate by ATP, the first committing step of glycolysis. This chain is ATP-dependent 6-phosphofructokinase, found in Clostridioides difficile (strain 630) (Peptoclostridium difficile).